Reading from the N-terminus, the 290-residue chain is MLKTVHQKAGRHTRPVRAWLKLLWQRIDEDNMTTLAGNLAYVSLLSLVPLIAVVFALFAAFPMFSDVSIQLRHFIFANFMPATGDVIQRYIEQFVANSNKMTAVGACGLIVTALLLMYAIDSALNTIWRSKRTRPKVYSFAVYWMILTLGPLLAGASLAISSYLLSLRWASDLNTVIDNVLRILPLLLSWISFWLLYSIVPTTRVPNRDALVGAFVAALLFEAGKKGFALYITMFPSYQLIYGVLAVIPILFVWVYWTWCIVLLGAEITVTLGEYRKLKQAAEQEEADQP.

Transmembrane regions (helical) follow at residues 44 to 64 (LLSL…FPMF), 104 to 124 (VGAC…DSAL), 140 to 160 (FAVY…SLAI), 183 to 203 (ILPL…VPTT), 210 to 230 (ALVG…GFAL), and 244 to 264 (VLAV…IVLL).

This sequence belongs to the UPF0761 family.

It is found in the cell inner membrane. In Salmonella agona (strain SL483), this protein is UPF0761 membrane protein YihY.